Reading from the N-terminus, the 52-residue chain is Stable plasmid inheritance protein (52 aa).

A helical transmembrane segment spans residues 6–26 (SSLVWCVLIVCLTLLIFTYLT).

The protein belongs to the Hok/Gef family.

It localises to the cell inner membrane. Its function is as follows. Toxic component of a type I toxin-antitoxin (TA) system. Part of the plasmid maintenance system, encodes a toxic protein that collapses the transmembrane potential and arrests respiration. When the adjacent non-translated flmB (sok) gene is disrupted FlmA no longer functions in plasmid maintenance (i.e. FlmB probably encodes an antisense antitoxin RNA). Translation of FlmA may be coupled to the upstream flmC gene. The protein is Stable plasmid inheritance protein (flmA) of Escherichia coli O157:H7.